Here is a 161-residue protein sequence, read N- to C-terminus: Cuticle protein 16.8 (161 aa).

Gln1 carries the pyrrolidone carboxylic acid modification. Residues 1–10 (QSEPAGPPQP) show a composition bias toward pro residues. Disordered stretches follow at residues 1-44 (QSEP…YSYT) and 67-103 (ETNEPGTKTSNPADAQIVSNAATDSYSPSPASSPAKP). The Chitin-binding type R&amp;R domain maps to 8–74 (PQPYTFSYDN…TVETNEPGTK (67 aa)). Polar residues predominate over residues 67–86 (ETNEPGTKTSNPADAQIVSN). The segment covering 87-103 (AATDSYSPSPASSPAKP) has biased composition (low complexity).

Its function is as follows. Component of the cuticle of the tick. Binds chitin. The chain is Cuticle protein 16.8 from Ixodes ricinus (Common tick).